The primary structure comprises 76 residues: Tautomerase PptA (76 aa).

Proline 2 acts as the Proton acceptor; via imino nitrogen in catalysis.

It belongs to the 4-oxalocrotonate tautomerase family. PptA subfamily. Homodimer.

It is found in the cytoplasm. This chain is Tautomerase PptA, found in Pectobacterium carotovorum subsp. carotovorum (strain PC1).